Consider the following 248-residue polypeptide: Triosephosphate isomerase (248 aa).

9 to 11 contacts substrate; the sequence is NWK. The active-site Electrophile is histidine 94. Residue glutamate 166 is the Proton acceptor of the active site. Substrate contacts are provided by residues glycine 172, serine 212, and 233-234; that span reads GG.

Belongs to the triosephosphate isomerase family. In terms of assembly, homodimer.

The protein resides in the cytoplasm. The catalysed reaction is D-glyceraldehyde 3-phosphate = dihydroxyacetone phosphate. The protein operates within carbohydrate biosynthesis; gluconeogenesis. Its pathway is carbohydrate degradation; glycolysis; D-glyceraldehyde 3-phosphate from glycerone phosphate: step 1/1. In terms of biological role, involved in the gluconeogenesis. Catalyzes stereospecifically the conversion of dihydroxyacetone phosphate (DHAP) to D-glyceraldehyde-3-phosphate (G3P). This Clostridium acetobutylicum (strain ATCC 824 / DSM 792 / JCM 1419 / IAM 19013 / LMG 5710 / NBRC 13948 / NRRL B-527 / VKM B-1787 / 2291 / W) protein is Triosephosphate isomerase.